A 190-amino-acid polypeptide reads, in one-letter code: NADH-dependent phenylglyoxylate dehydrogenase subunit gamma (190 aa).

In terms of assembly, dimer of heteropentamers composed of an alpha (PadG), a beta (PadI), a gamma (PadE), a delta (PadF) and an epsilon (PadH) subunit.

The enzyme catalyses phenylglyoxylate + NAD(+) + CoA = benzoyl-CoA + CO2 + NADH. With respect to regulation, activated by magnesium ions and thiamine diphosphate. Involved in the anaerobic metabolism of phenylalanine and phenylacetate. Catalyzes the oxidative decarboxylation of phenylglyoxylate to benzoyl-CoA and CO(2). It can also react slowly with 2-oxo-3-methylbutanoate and use different electron acceptors such as benzyl viologen, methyl viologen, FAD or FMN, but NAD seems to be the physiological electron acceptor. Also catalyzes an isotope exchange between CO(2) and the carboxyl group which proves partial or complete reversibility of the oxidative decarboxylation reaction. The polypeptide is NADH-dependent phenylglyoxylate dehydrogenase subunit gamma (padE) (Aromatoleum evansii (Azoarcus evansii)).